Here is a 185-residue protein sequence, read N- to C-terminus: Elongation factor P (185 aa).

Belongs to the elongation factor P family.

The protein resides in the cytoplasm. It functions in the pathway protein biosynthesis; polypeptide chain elongation. Functionally, involved in peptide bond synthesis. Stimulates efficient translation and peptide-bond synthesis on native or reconstituted 70S ribosomes in vitro. Probably functions indirectly by altering the affinity of the ribosome for aminoacyl-tRNA, thus increasing their reactivity as acceptors for peptidyl transferase. The protein is Elongation factor P of Burkholderia cenocepacia (strain HI2424).